Consider the following 430-residue polypeptide: UDP-N-acetylglucosamine 1-carboxyvinyltransferase (430 aa).

22-23 contributes to the phosphoenolpyruvate binding site; the sequence is KN. Residue Arg-102 participates in UDP-N-acetyl-alpha-D-glucosamine binding. The active-site Proton donor is the Cys-126. Cys-126 carries the post-translational modification 2-(S-cysteinyl)pyruvic acid O-phosphothioketal. UDP-N-acetyl-alpha-D-glucosamine contacts are provided by residues 131 to 135, 172 to 175, Asp-317, and Ile-339; these read RPVDL and KVSV.

This sequence belongs to the EPSP synthase family. MurA subfamily.

The protein resides in the cytoplasm. The enzyme catalyses phosphoenolpyruvate + UDP-N-acetyl-alpha-D-glucosamine = UDP-N-acetyl-3-O-(1-carboxyvinyl)-alpha-D-glucosamine + phosphate. It functions in the pathway cell wall biogenesis; peptidoglycan biosynthesis. Cell wall formation. Adds enolpyruvyl to UDP-N-acetylglucosamine. The sequence is that of UDP-N-acetylglucosamine 1-carboxyvinyltransferase from Rhizobium leguminosarum bv. trifolii (strain WSM2304).